The sequence spans 100 residues: Urease subunit gamma (100 aa).

It belongs to the urease gamma subunit family. In terms of assembly, heterotrimer of UreA (gamma), UreB (beta) and UreC (alpha) subunits. Three heterotrimers associate to form the active enzyme.

Its subcellular location is the cytoplasm. It catalyses the reaction urea + 2 H2O + H(+) = hydrogencarbonate + 2 NH4(+). Its pathway is nitrogen metabolism; urea degradation; CO(2) and NH(3) from urea (urease route): step 1/1. This is Urease subunit gamma from Lachnoclostridium phytofermentans (strain ATCC 700394 / DSM 18823 / ISDg) (Clostridium phytofermentans).